Consider the following 92-residue polypeptide: Putative septation protein SpoVG (92 aa).

Belongs to the SpoVG family.

In terms of biological role, could be involved in septation. The chain is Putative septation protein SpoVG from Thermoanaerobacter pseudethanolicus (strain ATCC 33223 / 39E) (Clostridium thermohydrosulfuricum).